The chain runs to 382 residues: Lipid-A-disaccharide synthase (382 aa).

It belongs to the LpxB family.

The enzyme catalyses 2-N,3-O-bis[(3R)-3-hydroxytetradecanoyl]-alpha-D-glucosaminyl 1-phosphate + UDP-2-N,3-O-bis[(3R)-3-hydroxytetradecanoyl]-alpha-D-glucosamine = lipid A disaccharide (E. coli) + UDP + H(+). It carries out the reaction a lipid X + a UDP-2-N,3-O-bis[(3R)-3-hydroxyacyl]-alpha-D-glucosamine = a lipid A disaccharide + UDP + H(+). It functions in the pathway glycolipid biosynthesis; lipid IV(A) biosynthesis; lipid IV(A) from (3R)-3-hydroxytetradecanoyl-[acyl-carrier-protein] and UDP-N-acetyl-alpha-D-glucosamine: step 5/6. Functionally, condensation of UDP-2,3-diacylglucosamine and 2,3-diacylglucosamine-1-phosphate to form lipid A disaccharide, a precursor of lipid A, a phosphorylated glycolipid that anchors the lipopolysaccharide to the outer membrane of the cell. The protein is Lipid-A-disaccharide synthase of Escherichia coli O8 (strain IAI1).